The primary structure comprises 113 residues: Small ribosomal subunit protein bS6 (113 aa).

The protein belongs to the bacterial ribosomal protein bS6 family.

In terms of biological role, binds together with bS18 to 16S ribosomal RNA. The chain is Small ribosomal subunit protein bS6 from Flavobacterium johnsoniae (strain ATCC 17061 / DSM 2064 / JCM 8514 / BCRC 14874 / CCUG 350202 / NBRC 14942 / NCIMB 11054 / UW101) (Cytophaga johnsonae).